Consider the following 134-residue polypeptide: Phosphomevalonate dehydratase small subunit (134 aa).

S62 acts as the Proton acceptor in catalysis.

This sequence belongs to the AcnX type II small subunit family. Heterodimer composed of a large subunit (PMDh-L) and a small subunit (PMDh-S).

The enzyme catalyses (R)-5-phosphomevalonate = (2E)-3-methyl-5-phosphooxypent-2-enoate + H2O. It participates in isoprenoid biosynthesis; isopentenyl diphosphate biosynthesis via mevalonate pathway. Functionally, component of a hydro-lyase that catalyzes the dehydration of mevalonate 5-phosphate (MVA5P) to form trans-anhydromevalonate 5-phosphate (tAHMP). Involved in the archaeal mevalonate (MVA) pathway, which provides fundamental precursors for isoprenoid biosynthesis, such as isopentenyl diphosphate (IPP) and dimethylallyl diphosphate (DMAPP). The protein is Phosphomevalonate dehydratase small subunit of Pyrococcus furiosus (strain ATCC 43587 / DSM 3638 / JCM 8422 / Vc1).